We begin with the raw amino-acid sequence, 675 residues long: Nexilin (675 aa).

The interval 1-66 is disordered; it reads MNDISQKAEI…RKEQYIRERE (66 aa). Lysine 16 carries the phosphoserine modification. Residues 27 to 66 show a composition bias toward basic and acidic residues; sequence GKGDVKDKFEAMQRAREERNQRRSRDEKQRRKEQYIRERE. Position 80 is a phosphoserine (serine 80). The tract at residues 105–127 is disordered; that stretch reads RFAEMEKQRQEEQRKRTEEERKR. Serine 241 carries the post-translational modification Phosphoserine. 2 disordered regions span residues 254-278 and 313-336; these read LERQ…EEEK and SFEE…ARRR. Phosphoserine occurs at positions 357 and 365. Position 370 is a phosphothreonine (threonine 370). Disordered regions lie at residues 487–513 and 551–584; these read ENFH…KVNM and LQKK…APWF. Phosphoserine occurs at positions 564 and 569. Residues 582-670 enclose the Ig-like domain; that stretch reads PWFKKPLKNT…GSAASTCILT (89 aa).

Interacts with F-actin. In terms of tissue distribution, abundantly expressed in heart and skeletal muscle, and at lower levels in placenta, lung, liver and pancreas. Also expressed in HeLaS3 and MOLT-4 cell lines.

Its subcellular location is the cytoplasm. The protein resides in the cytoskeleton. The protein localises to the cell junction. It localises to the adherens junction. It is found in the myofibril. Its subcellular location is the sarcomere. The protein resides in the z line. Involved in regulating cell migration through association with the actin cytoskeleton. Has an essential role in the maintenance of Z line and sarcomere integrity. This is Nexilin from Homo sapiens (Human).